The primary structure comprises 577 residues: Isocitrate dehydrogenase kinase/phosphatase (577 aa).

ATP-binding positions include alanine 318–methionine 324 and lysine 339. Aspartate 374 is a catalytic residue.

Belongs to the AceK family.

It is found in the cytoplasm. The catalysed reaction is L-seryl-[isocitrate dehydrogenase] + ATP = O-phospho-L-seryl-[isocitrate dehydrogenase] + ADP + H(+). Bifunctional enzyme which can phosphorylate or dephosphorylate isocitrate dehydrogenase (IDH) on a specific serine residue. This is a regulatory mechanism which enables bacteria to bypass the Krebs cycle via the glyoxylate shunt in response to the source of carbon. When bacteria are grown on glucose, IDH is fully active and unphosphorylated, but when grown on acetate or ethanol, the activity of IDH declines drastically concomitant with its phosphorylation. In Pseudomonas aeruginosa (strain ATCC 15692 / DSM 22644 / CIP 104116 / JCM 14847 / LMG 12228 / 1C / PRS 101 / PAO1), this protein is Isocitrate dehydrogenase kinase/phosphatase.